Here is a 564-residue protein sequence, read N- to C-terminus: Dihydroxy-acid dehydratase (564 aa).

C55 is a binding site for [2Fe-2S] cluster. Residue D87 participates in Mg(2+) binding. Residue C128 coordinates [2Fe-2S] cluster. Positions 129 and 130 each coordinate Mg(2+). At K130 the chain carries N6-carboxylysine. Position 200 (C200) interacts with [2Fe-2S] cluster. E452 contributes to the Mg(2+) binding site. Catalysis depends on S478, which acts as the Proton acceptor.

Belongs to the IlvD/Edd family. Homodimer. [2Fe-2S] cluster serves as cofactor. It depends on Mg(2+) as a cofactor.

The enzyme catalyses (2R)-2,3-dihydroxy-3-methylbutanoate = 3-methyl-2-oxobutanoate + H2O. It catalyses the reaction (2R,3R)-2,3-dihydroxy-3-methylpentanoate = (S)-3-methyl-2-oxopentanoate + H2O. It participates in amino-acid biosynthesis; L-isoleucine biosynthesis; L-isoleucine from 2-oxobutanoate: step 3/4. It functions in the pathway amino-acid biosynthesis; L-valine biosynthesis; L-valine from pyruvate: step 3/4. In terms of biological role, functions in the biosynthesis of branched-chain amino acids. Catalyzes the dehydration of (2R,3R)-2,3-dihydroxy-3-methylpentanoate (2,3-dihydroxy-3-methylvalerate) into 2-oxo-3-methylpentanoate (2-oxo-3-methylvalerate) and of (2R)-2,3-dihydroxy-3-methylbutanoate (2,3-dihydroxyisovalerate) into 2-oxo-3-methylbutanoate (2-oxoisovalerate), the penultimate precursor to L-isoleucine and L-valine, respectively. The chain is Dihydroxy-acid dehydratase from Albidiferax ferrireducens (strain ATCC BAA-621 / DSM 15236 / T118) (Rhodoferax ferrireducens).